Reading from the N-terminus, the 66-residue chain is Large ribosomal subunit protein bL32 (66 aa).

The protein belongs to the bacterial ribosomal protein bL32 family.

This is Large ribosomal subunit protein bL32 from Rickettsia conorii (strain ATCC VR-613 / Malish 7).